Reading from the N-terminus, the 352-residue chain is Uroporphyrinogen decarboxylase (352 aa).

Residues 27-31, D77, Y154, T209, and H325 contribute to the substrate site; that span reads RQAGR.

It belongs to the uroporphyrinogen decarboxylase family. Homodimer.

The protein localises to the cytoplasm. It carries out the reaction uroporphyrinogen III + 4 H(+) = coproporphyrinogen III + 4 CO2. The protein operates within porphyrin-containing compound metabolism; protoporphyrin-IX biosynthesis; coproporphyrinogen-III from 5-aminolevulinate: step 4/4. Functionally, catalyzes the decarboxylation of four acetate groups of uroporphyrinogen-III to yield coproporphyrinogen-III. This chain is Uroporphyrinogen decarboxylase, found in Legionella pneumophila (strain Lens).